Reading from the N-terminus, the 444-residue chain is Phosphoglucosamine mutase (444 aa).

The active-site Phosphoserine intermediate is Ser102. Mg(2+) is bound by residues Ser102, Asp241, Asp243, and Asp245. Residue Ser102 is modified to Phosphoserine.

It belongs to the phosphohexose mutase family. It depends on Mg(2+) as a cofactor. Post-translationally, activated by phosphorylation.

It catalyses the reaction alpha-D-glucosamine 1-phosphate = D-glucosamine 6-phosphate. Catalyzes the conversion of glucosamine-6-phosphate to glucosamine-1-phosphate. The sequence is that of Phosphoglucosamine mutase from Actinobacillus pleuropneumoniae serotype 7 (strain AP76).